The primary structure comprises 461 residues: Toxin CfTX-B (461 aa).

Residues 1–24 (MDPRISSRLRALALLVFVISITDG) form the signal peptide. A propeptide spanning residues 25–31 (IPNRAKR) is cleaved from the precursor.

Belongs to the jellyfish toxin family. Type II subfamily. As to quaternary structure, oligomer. Contains 2 disulfide bonds. As to expression, nematocytes.

The protein localises to the secreted. The protein resides in the nematocyst. It localises to the target cell membrane. Its function is as follows. The fraction containing this toxin and CfTX-B shows potent hemolytic activity. This fraction causes minor effects on the cardiovascular system of anesthetized rats (at 25 ug/kg), since it has no significant effects on heart rate but produces relatively small increases in mean arterial pressure. The chain is Toxin CfTX-B from Chironex fleckeri (Australian box jellyfish).